A 396-amino-acid polypeptide reads, in one-letter code: Elongation factor Tu 2 (396 aa).

One can recognise a tr-type G domain in the interval 10–206 (KPHVNVGTIG…TLDTYIPEPE (197 aa)). Residues 19-26 (GHVDHGKT) form a G1 region. 19 to 26 (GHVDHGKT) provides a ligand contact to GTP. Threonine 26 is a binding site for Mg(2+). Residues 60–64 (GITIN) are G2. Positions 81 to 84 (DCPG) are G3. GTP contacts are provided by residues 81 to 85 (DCPGH) and 136 to 139 (NKCD). The G4 stretch occupies residues 136–139 (NKCD). Residues 174–176 (SAL) are G5.

Belongs to the TRAFAC class translation factor GTPase superfamily. Classic translation factor GTPase family. EF-Tu/EF-1A subfamily. In terms of assembly, monomer.

It is found in the cytoplasm. It catalyses the reaction GTP + H2O = GDP + phosphate + H(+). In terms of biological role, GTP hydrolase that promotes the GTP-dependent binding of aminoacyl-tRNA to the A-site of ribosomes during protein biosynthesis. The protein is Elongation factor Tu 2 of Psychrobacter sp. (strain PRwf-1).